The sequence spans 57 residues: Orphan toxin OrtT (57 aa).

The next 2 helical transmembrane spans lie at 6–26 (HMLV…WFLS) and 34–54 (FLSA…ALLF).

Belongs to the GhoT/OrtT toxin family.

It is found in the cell inner membrane. Its function is as follows. Acts as an orphan toxin which is important for maintaining cell fitness during stress related to the stringent response. Increases the formation of persister cells. Has no known antitoxin. The sequence is that of Orphan toxin OrtT from Escherichia coli O6:H1 (strain CFT073 / ATCC 700928 / UPEC).